Reading from the N-terminus, the 468-residue chain is Tubulin gamma chain (468 aa).

Ala-142–Gly-148 is a binding site for GTP.

This sequence belongs to the tubulin family.

The protein localises to the cytoplasm. It is found in the cytoskeleton. It localises to the microtubule organizing center. Its function is as follows. Tubulin is the major constituent of microtubules. The gamma chain is found at microtubule organizing centers (MTOC) such as the spindle poles, suggesting that it is involved in the minus-end nucleation of microtubule assembly. The sequence is that of Tubulin gamma chain (TUBG) from Chlamydomonas reinhardtii (Chlamydomonas smithii).